A 441-amino-acid polypeptide reads, in one-letter code: UPF0761 membrane protein RSc1559 (441 aa).

Transmembrane regions (helical) follow at residues 44-64 (VLSL…FPMF), 101-121 (GLTA…MLTV), 141-161 (VLVF…SLSV), 182-202 (VVVG…LYVF), 207-227 (LVAW…FEIA), and 248-268 (FAAL…TLLG).

It belongs to the UPF0761 family.

It is found in the cell inner membrane. In Ralstonia nicotianae (strain ATCC BAA-1114 / GMI1000) (Ralstonia solanacearum), this protein is UPF0761 membrane protein RSc1559.